The chain runs to 494 residues: Ketol-acid reductoisomerase (NADP(+)) (494 aa).

The 195-residue stretch at 14–208 (LDQLGRCRFM…GGHRAGCLAS (195 aa)) folds into the KARI N-terminal Rossmann domain. NADP(+) is bound by residues 45 to 48 (CGAQ), Arg-68, Arg-76, Ser-78, and 108 to 110 (DKQ). His-132 is a catalytic residue. Position 158 (Gly-158) interacts with NADP(+). 2 KARI C-terminal knotted domains span residues 209–344 (SFVA…NYPT) and 345–487 (TDVK…MKDM). 4 residues coordinate Mg(2+): Asp-217, Glu-221, Glu-389, and Glu-393. Position 414 (Ser-414) interacts with substrate.

Belongs to the ketol-acid reductoisomerase family. Mg(2+) serves as cofactor.

It carries out the reaction (2R)-2,3-dihydroxy-3-methylbutanoate + NADP(+) = (2S)-2-acetolactate + NADPH + H(+). It catalyses the reaction (2R,3R)-2,3-dihydroxy-3-methylpentanoate + NADP(+) = (S)-2-ethyl-2-hydroxy-3-oxobutanoate + NADPH + H(+). The protein operates within amino-acid biosynthesis; L-isoleucine biosynthesis; L-isoleucine from 2-oxobutanoate: step 2/4. It functions in the pathway amino-acid biosynthesis; L-valine biosynthesis; L-valine from pyruvate: step 2/4. Functionally, involved in the biosynthesis of branched-chain amino acids (BCAA). Catalyzes an alkyl-migration followed by a ketol-acid reduction of (S)-2-acetolactate (S2AL) to yield (R)-2,3-dihydroxy-isovalerate. In the isomerase reaction, S2AL is rearranged via a Mg-dependent methyl migration to produce 3-hydroxy-3-methyl-2-ketobutyrate (HMKB). In the reductase reaction, this 2-ketoacid undergoes a metal-dependent reduction by NADPH to yield (R)-2,3-dihydroxy-isovalerate. The protein is Ketol-acid reductoisomerase (NADP(+)) of Vibrio cholerae serotype O1 (strain ATCC 39541 / Classical Ogawa 395 / O395).